The chain runs to 436 residues: Bifunctional protein GlmU (436 aa).

The tract at residues 1-225 (MNNNTSIIIL…EQNFMGINDK (225 aa)) is pyrophosphorylase. UDP-N-acetyl-alpha-D-glucosamine is bound by residues 10-13 (LAAG), K24, Q76, and 83-84 (GT). D104 contributes to the Mg(2+) binding site. 4 residues coordinate UDP-N-acetyl-alpha-D-glucosamine: G137, E151, N166, and N223. A Mg(2+)-binding site is contributed by N223. Residues 226–246 (FQLSIAEKIMQDEIKQNLMKA) form a linker region. The tract at residues 247 to 436 (GVLMRMPESI…KFFGKDDVKK (190 aa)) is N-acetyltransferase. R310 and K327 together coordinate UDP-N-acetyl-alpha-D-glucosamine. Residue H338 is the Proton acceptor of the active site. Positions 341 and 352 each coordinate UDP-N-acetyl-alpha-D-glucosamine. Acetyl-CoA is bound by residues 361-362 (NY), S380, A398, and R415.

This sequence in the N-terminal section; belongs to the N-acetylglucosamine-1-phosphate uridyltransferase family. The protein in the C-terminal section; belongs to the transferase hexapeptide repeat family. As to quaternary structure, homotrimer. The cofactor is Mg(2+).

The protein resides in the cytoplasm. The catalysed reaction is alpha-D-glucosamine 1-phosphate + acetyl-CoA = N-acetyl-alpha-D-glucosamine 1-phosphate + CoA + H(+). It catalyses the reaction N-acetyl-alpha-D-glucosamine 1-phosphate + UTP + H(+) = UDP-N-acetyl-alpha-D-glucosamine + diphosphate. It participates in nucleotide-sugar biosynthesis; UDP-N-acetyl-alpha-D-glucosamine biosynthesis; N-acetyl-alpha-D-glucosamine 1-phosphate from alpha-D-glucosamine 6-phosphate (route II): step 2/2. It functions in the pathway nucleotide-sugar biosynthesis; UDP-N-acetyl-alpha-D-glucosamine biosynthesis; UDP-N-acetyl-alpha-D-glucosamine from N-acetyl-alpha-D-glucosamine 1-phosphate: step 1/1. Its pathway is bacterial outer membrane biogenesis; LPS lipid A biosynthesis. Its function is as follows. Catalyzes the last two sequential reactions in the de novo biosynthetic pathway for UDP-N-acetylglucosamine (UDP-GlcNAc). The C-terminal domain catalyzes the transfer of acetyl group from acetyl coenzyme A to glucosamine-1-phosphate (GlcN-1-P) to produce N-acetylglucosamine-1-phosphate (GlcNAc-1-P), which is converted into UDP-GlcNAc by the transfer of uridine 5-monophosphate (from uridine 5-triphosphate), a reaction catalyzed by the N-terminal domain. The polypeptide is Bifunctional protein GlmU (Campylobacter concisus (strain 13826)).